A 113-amino-acid polypeptide reads, in one-letter code: Molt-inhibiting hormone (113 aa).

The signal sequence occupies residues 1–35; sequence MMSRTESRYSSQRTWLLSMVVLAALWSISVQRATA. 3 cysteine pairs are disulfide-bonded: Cys42–Cys79, Cys59–Cys75, and Cys62–Cys88.

This sequence belongs to the arthropod CHH/MIH/GIH/VIH hormone family.

Its subcellular location is the secreted. Inhibits Y-organs where molting hormone (ecdysteroid) is secreted. A molting cycle is initiated when MIH secretion diminishes or stops. The polypeptide is Molt-inhibiting hormone (Metacarcinus magister (Dungeness crab)).